A 59-amino-acid chain; its full sequence is Putative zinc finger protein ORF59a (59 aa).

The C2H2-type; degenerate zinc-finger motif lies at 11 to 33; sequence YQCLRCGLTFRTKKQLIRHLVNT.

The polypeptide is Putative zinc finger protein ORF59a (Acidianus hospitalis (AFV-1)).